The primary structure comprises 449 residues: tRNA-2-methylthio-N(6)-dimethylallyladenosine synthase (449 aa).

The MTTase N-terminal domain maps to 7–124 (DAFYIHTFGC…LPLLIKQVQQ (118 aa)). [4Fe-4S] cluster contacts are provided by C16, C52, C87, C163, C167, and C170. Positions 149 to 379 (RSSSMSAFVP…IECQNRISAS (231 aa)) constitute a Radical SAM core domain. The TRAM domain occupies 382–445 (SQAVGSVVEV…SATLLGEPLI (64 aa)).

Belongs to the methylthiotransferase family. MiaB subfamily. Monomer. Requires [4Fe-4S] cluster as cofactor.

Its subcellular location is the cytoplasm. The enzyme catalyses N(6)-dimethylallyladenosine(37) in tRNA + (sulfur carrier)-SH + AH2 + 2 S-adenosyl-L-methionine = 2-methylsulfanyl-N(6)-dimethylallyladenosine(37) in tRNA + (sulfur carrier)-H + 5'-deoxyadenosine + L-methionine + A + S-adenosyl-L-homocysteine + 2 H(+). Functionally, catalyzes the methylthiolation of N6-(dimethylallyl)adenosine (i(6)A), leading to the formation of 2-methylthio-N6-(dimethylallyl)adenosine (ms(2)i(6)A) at position 37 in tRNAs that read codons beginning with uridine. The protein is tRNA-2-methylthio-N(6)-dimethylallyladenosine synthase of Chlorobium chlorochromatii (strain CaD3).